The primary structure comprises 74 residues: Conotoxin AbVIH (74 aa).

Positions 1-17 (VLIIAVLFLTACQLTTA) are cleaved as a signal peptide. The propeptide occupies 18–40 (ETSSRGKQKHRALRSTDKDSRMT). The disordered stretch occupies residues 19-40 (TSSRGKQKHRALRSTDKDSRMT). Disulfide bonds link cysteine 43–cysteine 57, cysteine 50–cysteine 61, and cysteine 56–cysteine 68.

Belongs to the conotoxin O1 superfamily. Expressed by the venom duct.

The protein localises to the secreted. The chain is Conotoxin AbVIH from Conus abbreviatus (Abbreviated cone).